The sequence spans 349 residues: ATP phosphoribosyltransferase regulatory subunit (349 aa).

The interval 327-349 (GRGRGVRPRRASARGGRARARPR) is disordered. Over residues 330–349 (RGVRPRRASARGGRARARPR) the composition is skewed to basic residues.

Belongs to the class-II aminoacyl-tRNA synthetase family. HisZ subfamily. In terms of assembly, heteromultimer composed of HisG and HisZ subunits.

Its subcellular location is the cytoplasm. It participates in amino-acid biosynthesis; L-histidine biosynthesis; L-histidine from 5-phospho-alpha-D-ribose 1-diphosphate: step 1/9. Required for the first step of histidine biosynthesis. May allow the feedback regulation of ATP phosphoribosyltransferase activity by histidine. The sequence is that of ATP phosphoribosyltransferase regulatory subunit from Anaeromyxobacter sp. (strain K).